The primary structure comprises 242 residues: N-alpha-acetyltransferase 60 (242 aa).

Residues 1–192 (MSEEERPAAL…GGHPPWTVMD (192 aa)) lie on the Cytoplasmic side of the membrane. Residues 13-182 (TILRFLCHDD…DAYTYVLYLN (170 aa)) enclose the N-acetyltransferase domain. Tyrosine 38 contributes to the substrate binding site. The active site involves tyrosine 97. A substrate-binding site is contributed by leucine 99. Acetyl-CoA-binding positions include 101–103 (LGV) and 109–114 (KQGIGS). Histidine 138 is a catalytic residue. Residues asparagine 143 and 150 to 153 (YENR) contribute to the acetyl-CoA site. A required for homodimerization region spans residues 162–173 (PYYYSIRGVLQD). Position 165 (tyrosine 165) interacts with substrate. The helical intramembrane region spans 193-236 (YLQHLGSALAGFSPCTLPQRIYRQAHTLLRSLLPWSSISAKSGI). Residues 237-242 (EYSRTM) lie on the Cytoplasmic side of the membrane.

The protein belongs to the acetyltransferase family. NAA60 subfamily. Monomer and homodimer; monomer in presence of substrate and homodimer in its absence.

The protein resides in the golgi apparatus membrane. It catalyses the reaction N-terminal L-methionyl-[transmembrane protein] + acetyl-CoA = N-terminal N(alpha)-acetyl-L-methionyl-[transmembrane protein] + CoA + H(+). The enzyme catalyses L-lysyl-[protein] + acetyl-CoA = N(6)-acetyl-L-lysyl-[protein] + CoA + H(+). Functionally, N-alpha-acetyltransferase that specifically mediates the acetylation of N-terminal residues of the transmembrane proteins, with a strong preference for N-termini facing the cytosol. Displays N-terminal acetyltransferase activity towards a range of N-terminal sequences including those starting with Met-Lys, Met-Val, Met-Ala and Met-Met. Required for normal chromosomal segregation during anaphase. May also show histone acetyltransferase activity; such results are however unclear in vivo and would require additional experimental evidences. This Xenopus tropicalis (Western clawed frog) protein is N-alpha-acetyltransferase 60 (naa60).